Here is a 313-residue protein sequence, read N- to C-terminus: PGR5-like protein 1B, chloroplastic (313 aa).

Residues 1–49 (MAFTLTIPRFSAISRKPITCSSSRTQCPAPFTHGRSISLRRRLTLLPLK) constitute a chloroplast transit peptide. Ala-50 carries the N-acetylalanine modification. At 50–187 (ASTDQSGQVG…KVYSDLAIDY (138 aa)) the chain is on the stromal side. A disulfide bond links Cys-71 and Cys-172. A helical membrane pass occupies residues 188 to 208 (FKMFLLNVPATVVALGLFFFL). The Lumenal, thylakoid portion of the chain corresponds to 209–225 (DDITGFEITYLLELPEP). Residues 226–246 (FSFIFTWFAAVPAIVYLALSL) traverse the membrane as a helical segment. The Stromal portion of the chain corresponds to 247-313 (TKLILKDFLI…LITLPEGGKA (67 aa)).

Belongs to the PGR5 family. In terms of assembly, homodimer and heterodimer with PGR5. Interacts with PGR5, FD2, psaD1, LFNR1 and LFNR2. Also interacts with petC and a Fe-containing cofactor (FCC). Post-translationally, disulfide bonds; Cys-289 and Cys-292 are probably involved in the formation of disulfide bridges with 'Cys-11' and 'Cys-105' of PGR5 while Cys-261 and Cys-264 are probably involved in the binding of a Fe-containing cofactor (FCC).

Its subcellular location is the plastid. The protein localises to the chloroplast thylakoid membrane. With respect to regulation, inhibited by antimycin A. In terms of biological role, ferredoxin-plastoquinone reductase involved in cyclic electron flow (CEF) around photosystem I. The homodimer is probably not involved in CEF. The sequence is that of PGR5-like protein 1B, chloroplastic (PGRL1B) from Arabidopsis thaliana (Mouse-ear cress).